The primary structure comprises 351 residues: Very-long-chain 3-oxoacyl-CoA reductase (351 aa).

The chain crosses the membrane as a helical span at residues 26–46 (LLWCAFTVGAVKLTTFMLSLI). The NADP(+) site is built by L72, D126, N153, Y225, K229, V258, and S260. The active-site Proton donor is Y225. K229 (lowers pKa of active site Tyr) is an active-site residue.

It belongs to the short-chain dehydrogenases/reductases (SDR) family.

The protein localises to the endoplasmic reticulum membrane. It catalyses the reaction a very-long-chain (3R)-3-hydroxyacyl-CoA + NADP(+) = a very-long-chain 3-oxoacyl-CoA + NADPH + H(+). The protein operates within lipid metabolism; fatty acid biosynthesis. Component of the microsomal membrane bound fatty acid elongation system, which produces the 26-carbon very long-chain fatty acids (VLCFA) from palmitate. Catalyzes the reduction of the 3-ketoacyl-CoA intermediate that is formed in each cycle of fatty acid elongation. VLCFAs serve as precursors for ceramide and sphingolipids. The polypeptide is Very-long-chain 3-oxoacyl-CoA reductase (Eremothecium gossypii (strain ATCC 10895 / CBS 109.51 / FGSC 9923 / NRRL Y-1056) (Yeast)).